The following is a 957-amino-acid chain: Glycine dehydrogenase (decarboxylating) (957 aa).

The residue at position 708 (Lys-708) is an N6-(pyridoxal phosphate)lysine.

It belongs to the GcvP family. The glycine cleavage system is composed of four proteins: P, T, L and H. The cofactor is pyridoxal 5'-phosphate.

The enzyme catalyses N(6)-[(R)-lipoyl]-L-lysyl-[glycine-cleavage complex H protein] + glycine + H(+) = N(6)-[(R)-S(8)-aminomethyldihydrolipoyl]-L-lysyl-[glycine-cleavage complex H protein] + CO2. The glycine cleavage system catalyzes the degradation of glycine. The P protein binds the alpha-amino group of glycine through its pyridoxal phosphate cofactor; CO(2) is released and the remaining methylamine moiety is then transferred to the lipoamide cofactor of the H protein. In Escherichia coli (strain SE11), this protein is Glycine dehydrogenase (decarboxylating).